Here is a 362-residue protein sequence, read N- to C-terminus: MKTLHVQTASSSYPVFIGQGIRKKACELLTSLNRPLTRIMFVTDEEVDRLYGDEMLHLLQEKWPVKKVTVPSGEQAKSMDMYTKLQSEAIRFHMDRSSCIIAFGGGVVGDLAGFVAATFMRGIDFIQMPTTLLAHDSAVGGKVAVNHPLGKNLIGAFYQPKAVLYDTDFLRSLPEKELRSGMAEVIKHAFIYDRAFLEELLNIHSLRDITNDQLNDMIFKGISIKASVVQQDEKEEGIRAYLNFGHTLGHAVEAEYGYGQITHGDAVALGMQFALYISEKTVGCEMDRKRLVSWLKSLGYPSQIRKETETSVLLNRMMNDKKTRGGKIQFIVLNELGKVADHTFSRNELESWLNKWRLEETS.

NAD(+) is bound by residues 72 to 77 (SGEQAK), 106 to 110 (GVVGD), 130 to 131 (TT), Lys-142, and Lys-151. Zn(2+) is bound by residues Glu-184, His-246, and His-263.

This sequence belongs to the sugar phosphate cyclases superfamily. Dehydroquinate synthase family. Requires NAD(+) as cofactor. Co(2+) is required as a cofactor. Zn(2+) serves as cofactor.

It localises to the cytoplasm. It carries out the reaction 7-phospho-2-dehydro-3-deoxy-D-arabino-heptonate = 3-dehydroquinate + phosphate. The protein operates within metabolic intermediate biosynthesis; chorismate biosynthesis; chorismate from D-erythrose 4-phosphate and phosphoenolpyruvate: step 2/7. Functionally, catalyzes the conversion of 3-deoxy-D-arabino-heptulosonate 7-phosphate (DAHP) to dehydroquinate (DHQ). In Bacillus subtilis (strain 168), this protein is 3-dehydroquinate synthase.